The sequence spans 313 residues: Ribonuclease HIII (313 aa).

Residues 62–88 (AERWTADAETPAPKKPASKKSIPSVYQ) are disordered. Residues 96–312 (MSVIGSDEVG…TQKAKRIASK (217 aa)) enclose the RNase H type-2 domain. Positions 102, 103, and 207 each coordinate a divalent metal cation.

Belongs to the RNase HII family. RnhC subfamily. It depends on Mn(2+) as a cofactor. The cofactor is Mg(2+).

It localises to the cytoplasm. It carries out the reaction Endonucleolytic cleavage to 5'-phosphomonoester.. Its function is as follows. Endonuclease that specifically degrades the RNA of RNA-DNA hybrids. This is Ribonuclease HIII from Bacillus licheniformis (strain ATCC 14580 / DSM 13 / JCM 2505 / CCUG 7422 / NBRC 12200 / NCIMB 9375 / NCTC 10341 / NRRL NRS-1264 / Gibson 46).